Here is a 129-residue protein sequence, read N- to C-terminus: Small ribosomal subunit protein uS11 (129 aa).

It belongs to the universal ribosomal protein uS11 family. In terms of assembly, part of the 30S ribosomal subunit. Interacts with proteins S7 and S18. Binds to IF-3.

Its function is as follows. Located on the platform of the 30S subunit, it bridges several disparate RNA helices of the 16S rRNA. Forms part of the Shine-Dalgarno cleft in the 70S ribosome. The protein is Small ribosomal subunit protein uS11 of Thermosipho africanus (strain TCF52B).